A 29-amino-acid chain; its full sequence is Sarcolamban B (29 aa).

Residues 7 to 27 (LFTTFLILAFLLFLLYAFYEA) form a helical membrane-spanning segment.

In terms of assembly, interacts with SERCA. In terms of tissue distribution, strongly expressed in embryonic and larval somatic muscles and postembryonic heart.

The protein localises to the sarcoplasmic reticulum membrane. Its function is as follows. Plays an essential role in the regulation of calcium transport at the sarcoplasmic reticulum (SR), which is secondarily required for regular muscle contraction. The sequence is that of Sarcolamban B from Drosophila melanogaster (Fruit fly).